A 341-amino-acid polypeptide reads, in one-letter code: MVTDQGGRTSEADGGPVRHIPVLLEEVLAALEPAPGKVILDGTFGAGGYASAILDAGAEVIALDRDPTAIAAGQSMVSASGGRLSLIHSRFSGLAEHAPAEGLDGVVLDVGVSSMQIDEAERGFSFQKKGPLDMRMSAAGVSAADVVNRAKVSDLIRIFGFLGEEKQAGRIARTIEKRRAEAPFETTRDLANLIETVTPRKAKDKIHPATRVFQALRIFVNDELGELAAALFAAERALKPGGRLVVVSFHSLEDRIVKTFFQDRSGKAGGSRHLPLVTARAATFAPVGKPMVSASDEEASRNPRARSAKLRAGIRTAAPSPGADLSIFNLPELASLARLGG.

S-adenosyl-L-methionine contacts are provided by residues 47-49, D64, F91, D109, and Q116; that span reads GGY.

This sequence belongs to the methyltransferase superfamily. RsmH family.

The protein resides in the cytoplasm. The enzyme catalyses cytidine(1402) in 16S rRNA + S-adenosyl-L-methionine = N(4)-methylcytidine(1402) in 16S rRNA + S-adenosyl-L-homocysteine + H(+). Its function is as follows. Specifically methylates the N4 position of cytidine in position 1402 (C1402) of 16S rRNA. This Sinorhizobium medicae (strain WSM419) (Ensifer medicae) protein is Ribosomal RNA small subunit methyltransferase H.